Consider the following 816-residue polypeptide: Ribonucleoside-diphosphate reductase large subunit (816 aa).

The 92-residue stretch at 1-92 folds into the ATP-cone domain; the sequence is MYVVKRDGRQ…VSNLHKNTKK (92 aa). ATP-binding positions include 5 to 6, 11 to 17, threonine 53, and aspartate 57; these read KR and ETVHFDK. Residues serine 202 and serine 217 each contribute to the GDP site. A disulfide bridge connects residues cysteine 218 and cysteine 444. DTTP is bound by residues 226 to 228, lysine 243, arginine 256, and 263 to 264; these read DSI and RG. Asparagine 427 contacts GDP. The active-site Proton acceptor is the asparagine 427. The active-site Cysteine radical intermediate is the cysteine 429. GDP contacts are provided by residues glutamate 431 and 623-626; that span reads TAST. Glutamate 431 functions as the Proton acceptor in the catalytic mechanism.

This sequence belongs to the ribonucleoside diphosphate reductase large chain family. In terms of assembly, heterotetramer of two large/R1 and two small/R2 subunits. A radical transfer pathway may occur between 'Tyr-125' of protein R2 and R1. In terms of processing, contains a disulfide bonds. Binding of the substrate occurs primarily when the active-site cysteines are reduced. Highly expressed in actively growing tissues such as young leaves, shoot apices, inflorescences and carpels. Very low expression in cotyledons, adult and cauline leaves and senescent leaves.

Its subcellular location is the cytoplasm. It carries out the reaction a 2'-deoxyribonucleoside 5'-diphosphate + [thioredoxin]-disulfide + H2O = a ribonucleoside 5'-diphosphate + [thioredoxin]-dithiol. Under complex allosteric control mediated by deoxynucleoside triphosphates and ATP binding to separate specificity and activation sites on the large subunit. The type of nucleotide bound at the specificity site determines substrate preference. It seems probable that ATP makes the enzyme reduce CDP and UDP, dGTP favors ADP reduction and dTTP favors GDP reduction. Stimulated by ATP and inhibited by dATP binding to the activity site. In terms of biological role, provides the precursors necessary for DNA synthesis. Catalyzes the biosynthesis of deoxyribonucleotides from the corresponding ribonucleotides. R1 contains the binding sites for both substrates and allosteric effectors and carries out the actual reduction of the ribonucleotide. Ribonucleotide reductase (RNR) complex function is essential for efficient organellar DNA degradation in pollen. Involved in chloroplast division. The chain is Ribonucleoside-diphosphate reductase large subunit from Arabidopsis thaliana (Mouse-ear cress).